The chain runs to 257 residues: tRNA-cytidine(32) 2-sulfurtransferase (257 aa).

The PP-loop motif signature appears at 37 to 42; sequence SGGKDS. C112, C115, and C202 together coordinate [4Fe-4S] cluster.

The protein belongs to the TtcA family. Homodimer. Mg(2+) serves as cofactor. It depends on [4Fe-4S] cluster as a cofactor.

It is found in the cytoplasm. It carries out the reaction cytidine(32) in tRNA + S-sulfanyl-L-cysteinyl-[cysteine desulfurase] + AH2 + ATP = 2-thiocytidine(32) in tRNA + L-cysteinyl-[cysteine desulfurase] + A + AMP + diphosphate + H(+). Its pathway is tRNA modification. In terms of biological role, catalyzes the ATP-dependent 2-thiolation of cytidine in position 32 of tRNA, to form 2-thiocytidine (s(2)C32). The sulfur atoms are provided by the cysteine/cysteine desulfurase (IscS) system. This chain is tRNA-cytidine(32) 2-sulfurtransferase, found in Geobacter metallireducens (strain ATCC 53774 / DSM 7210 / GS-15).